A 118-amino-acid chain; its full sequence is Endoribonuclease MazF9 (118 aa).

It belongs to the PemK/MazF family. Forms a complex with cognate antitoxin MazE9.

In terms of biological role, toxic component of a type II toxin-antitoxin (TA) system. Upon expression in E.coli and M.smegmatis inhibits cell growth and colony formation. Its toxic effect is neutralized by coexpression with cognate antitoxin MazE9. Acts as an mRNA interferase, specifically cleaving between U and C in UAC sequences. May cleave its cognate antitoxin's gene. In E.coli expression with non-cognate antitoxins VapB27 and VapB40 partially neutralizes the toxin. In Mycobacterium tuberculosis (strain ATCC 25618 / H37Rv), this protein is Endoribonuclease MazF9 (mazF9).